Consider the following 385-residue polypeptide: Benzoylsuccinyl-CoA thiolase subunit BbsB (385 aa).

R19 is a binding site for CoA. C84 serves as the catalytic Acyl-thioester intermediate. Residues G121, R193, C204, and C205 each contribute to the CoA site.

The protein belongs to the thiolase-like superfamily. Thiolase family. Heterotetramer composed of two BbsA subunits and two BbsB subunits. BbsB forms homodimeric subcomplexes. Both BbsA and BbsB are essential for enzymatic activity.

It catalyses the reaction (S)-2-benzoylsuccinyl-CoA + CoA = benzoyl-CoA + succinyl-CoA. It functions in the pathway xenobiotic degradation; toluene degradation. Component of the BbsAB thiolase complex, which catalyzes the thiolytic cleavage of (S)-2-benzoylsuccinyl-CoA to succinyl-CoA and benzoyl-CoA, the final step of anaerobic toluene metabolism. This Thauera aromatica protein is Benzoylsuccinyl-CoA thiolase subunit BbsB.